Consider the following 156-residue polypeptide: MNINLTLFGQTLAFAIFVWFCMKLVWPPITAAMAARQKKIAEGLDAAGRAQQDLKLAQDKVSHTLRETKEQAAQIIEQANKHANAIIEEAKQQARVEGERLVAGARAEIEQEVNRARDQLRSQVAALAVAGAEKILESQVDAKVHNELVEKLASQL.

Residues 12-32 traverse the membrane as a helical segment; it reads LAFAIFVWFCMKLVWPPITAA.

Belongs to the ATPase B chain family. As to quaternary structure, F-type ATPases have 2 components, F(1) - the catalytic core - and F(0) - the membrane proton channel. F(1) has five subunits: alpha(3), beta(3), gamma(1), delta(1), epsilon(1). F(0) has three main subunits: a(1), b(2) and c(10-14). The alpha and beta chains form an alternating ring which encloses part of the gamma chain. F(1) is attached to F(0) by a central stalk formed by the gamma and epsilon chains, while a peripheral stalk is formed by the delta and b chains.

The protein resides in the cell inner membrane. F(1)F(0) ATP synthase produces ATP from ADP in the presence of a proton or sodium gradient. F-type ATPases consist of two structural domains, F(1) containing the extramembraneous catalytic core and F(0) containing the membrane proton channel, linked together by a central stalk and a peripheral stalk. During catalysis, ATP synthesis in the catalytic domain of F(1) is coupled via a rotary mechanism of the central stalk subunits to proton translocation. Functionally, component of the F(0) channel, it forms part of the peripheral stalk, linking F(1) to F(0). The chain is ATP synthase subunit b from Stutzerimonas stutzeri (strain A1501) (Pseudomonas stutzeri).